A 408-amino-acid polypeptide reads, in one-letter code: Probable pectate lyase 5 (408 aa).

The signal sequence occupies residues 1–27 (MRMTLVHLSLSLFSCLLLVLSPTFIAS). The N-linked (GlcNAc...) asparagine glycan is linked to Asn-45. Asp-206, Asp-230, and Asp-234 together coordinate Ca(2+). The active site involves Arg-286.

It belongs to the polysaccharide lyase 1 family. Ca(2+) serves as cofactor.

The catalysed reaction is Eliminative cleavage of (1-&gt;4)-alpha-D-galacturonan to give oligosaccharides with 4-deoxy-alpha-D-galact-4-enuronosyl groups at their non-reducing ends.. It participates in glycan metabolism; pectin degradation; 2-dehydro-3-deoxy-D-gluconate from pectin: step 2/5. In Arabidopsis thaliana (Mouse-ear cress), this protein is Probable pectate lyase 5.